We begin with the raw amino-acid sequence, 233 residues long: Segregation and condensation protein A (233 aa).

This sequence belongs to the ScpA family. In terms of assembly, component of a cohesin-like complex composed of ScpA, ScpB and the Smc homodimer, in which ScpA and ScpB bind to the head domain of Smc. The presence of the three proteins is required for the association of the complex with DNA.

Its subcellular location is the cytoplasm. Its function is as follows. Participates in chromosomal partition during cell division. May act via the formation of a condensin-like complex containing Smc and ScpB that pull DNA away from mid-cell into both cell halves. In Streptococcus pyogenes serotype M1, this protein is Segregation and condensation protein A.